A 902-amino-acid polypeptide reads, in one-letter code: MLYKLLSSYITLTLLFLLLAVGAAIATFIENDFGTASARALVYDHLWYEALLGVLALNLLAVIHRTKLYRFKARFLFHIAFVVILLGAGLTRYLGNEGIMHIREGESASSFLTTKPYLQVTLHEGTSPRTHFFPLEITAWKNRLQKSLPTQSTPLKIALVDSFIHKEGLGVSGYFDLELLHKEKRIKKRFTHNLASSLQKETLWLDDLQVDLAYGPQEIPLPFSLSLKAFELKRYPGSRSPSEYTSHVALVDPSQKVALEETIFMNNTLSYGGYKFFQTSYDMDEKGTILTLNQDPGKEVTYLGYALLFLGLLWNLLDPTSRFRVLLGRIKKDSLSLLLPLCLLSPLASSLYAQSDYLQGYLKEHQKGSQELSKGFGELIVQAKMGRMEPLNTLNREILYKLSGKSSFLGMSADQVVLGMLSNPRAWQGVPLIRVKTKPLQELIGIHPQNRARFNDFFDENSAYKLQKEVERASTLPPSRRGSYENDLLKVDERLNIALMVFQGSLFKLFPLPSDPHHRWLNLKESIFMLEGEEAKTLHQATALLLDSAFERQYFKGIEALQTISFYQYKKGNEVIPSESKLQAELLFNRLEIFPHLTPAYLVLGFLVLLSAFGLLFFPPLASHRVRVSFHLLGWILFALHTLGLLLRAYVSGHAPLSDTYESMLYISWSGMLGALLFFRHSLFALSASILMAGIFLFGAHLSHIDPEITNLVPVLKSFWLTLHVSVITASYGFFGVGAFLGSFALALFILKDHLKTPLDKPIHQLSQINEVSLILGLTLLVIGNFLGGIWANESWGRYWAWDPKETWSYISILLYALILHLRLLRPKHYDYLFSLLSLWGFGSILMTYFGVNFYLAGLHSYAQGDPLPIPLWVYALSLALALLSLIAYPHRHLQNSDKGNS.

10 helical membrane-spanning segments follow: residues 9-29, 75-95, 300-320, 335-355, 602-622, 659-679, 731-751, 772-792, 832-852, and 868-888; these read YITL…ATFI, FLFH…RYLG, VTYL…LDPT, LSLL…YAQS, LVLG…PPLA, DTYE…LLFF, SYGF…LFIL, VSLI…GIWA, YLFS…YFGV, and LPIP…SLIA.

It in the C-terminal section; belongs to the CcmF/CycK/Ccl1/NrfE/CcsA family.

It localises to the cell membrane. Functionally, may play a role in cytochrome c biogenesis and may be required for maturation of the NrfA protein. This is Protein NrfI (nrfI) from Wolinella succinogenes (strain ATCC 29543 / DSM 1740 / CCUG 13145 / JCM 31913 / LMG 7466 / NCTC 11488 / FDC 602W) (Vibrio succinogenes).